A 97-amino-acid chain; its full sequence is Conotoxin Cal6.1b (97 aa).

Positions 1–22 (MKLTTVLVVALLVLAACQFTVT) are cleaved as a signal peptide. The interval 22–46 (TDNSGDDPENPSLRSAGENQNPDST) is disordered. Residues 23 to 68 (DNSGDDPENPSLRSAGENQNPDSTKTITAWATRDMTNMRRGLNRPS) constitute a propeptide that is removed on maturation. Intrachain disulfides connect Cys-71–Cys-87, Cys-78–Cys-91, and Cys-86–Cys-96.

The protein belongs to the conotoxin O1 superfamily. In terms of tissue distribution, expressed by the venom duct.

It is found in the secreted. Probable neurotoxin with unknown target. Possibly targets ion channels. The protein is Conotoxin Cal6.1b of Californiconus californicus (California cone).